The chain runs to 607 residues: Elongation factor 4 (607 aa).

Residues 11-193 (SKIRNFSIIA…QIVEKVPAPT (183 aa)) enclose the tr-type G domain. GTP contacts are provided by residues 23-28 (DHGKST) and 140-143 (NKID).

The protein belongs to the TRAFAC class translation factor GTPase superfamily. Classic translation factor GTPase family. LepA subfamily.

Its subcellular location is the cell membrane. It catalyses the reaction GTP + H2O = GDP + phosphate + H(+). Required for accurate and efficient protein synthesis under certain stress conditions. May act as a fidelity factor of the translation reaction, by catalyzing a one-codon backward translocation of tRNAs on improperly translocated ribosomes. Back-translocation proceeds from a post-translocation (POST) complex to a pre-translocation (PRE) complex, thus giving elongation factor G a second chance to translocate the tRNAs correctly. Binds to ribosomes in a GTP-dependent manner. The sequence is that of Elongation factor 4 from Bacillus cereus (strain ZK / E33L).